Here is a 782-residue protein sequence, read N- to C-terminus: MERARPEPPPPPPPPPRQPPRPTPPRPLRPAPPAQPVEAATFRAAAAERSQSPSAQATAAMAAVASSCGEAAAAGAQAAGTRRLLQVKPEQVLLLPPGGPGVPPAPDEGAAAAAAAAAAAASSAQARLLQLRPELLLLPPQSAADGGPCRPELHPMQPRTLLVKAEKQELGAGLDLSVGSRRTTEAGPRASRAAKLDGTGKALDGRRSDEKKAKLEAEEAPRDALKGGEGKSLLAIGEGVIKTEEPDRPRDDCRLGTEATSNGLVHSSKEAILAQPPSAFGPHQQDLRFPLTLHTVPPGARIQFQGPPPSELIRLSKVPLTPVPIKMQSLLEPSVKIETKDVPLTVLPSDAGIPDTPFSKDRNGHVKRPMNAFMVWARIHRPALAKANPAANNAEISVQLGLEWNKLSEEQKKPYYDEAQKIKEKHREEFPGWVYQPRPGKRKRFPLSVSNVFSGTTQNIISTNPTTIYPYRSPTYSVVIPGLQNTITHPVGEAPPAIQLPTPAVQRPSPITLFQPSVSSTGPVAVPPPSLTPRPSLPPQRFSGPSQTDIHRLPSGSSRSVKRSTPGSLESTTRIPAGASTAHARFATSPIQPPKEYASVSTCPRSTPIPPATPIPHSHVYQPPPLGHPATLFGTPPRFSFHHPYFLPGPHYFPSSTCPYSRPPFGYGNFPSSMPECLGYYEDRYQKHEAIFSALNRDYPFRDYPDEHTHSEDSRSCESMDGPPYYSSHGHGGEEYLNAMPTLDIGALENVFTAPASAPSGVQQVNVTDSDEEEEEKVLRNL.

3 disordered regions span residues 1 to 37 (MERARPEPPPPPPPPPRQPPRPTPPRPLRPAPPAQPV), 95 to 117 (LPPGGPGVPPAPDEGAAAAAAAA), and 139 to 226 (PPQS…DALK). Pro residues-rich tracts occupy residues 7–35 (EPPPPPPPPPRQPPRPTPPRPLRPAPPAQ) and 97–106 (PGGPGVPPAP). Positions 203–226 (LDGRRSDEKKAKLEAEEAPRDALK) are enriched in basic and acidic residues. The segment at residues 366–434 (VKRPMNAFMV…KHREEFPGWV (69 aa)) is a DNA-binding region (HMG box). 3 disordered regions span residues 501-604 (PTPA…STCP), 704-724 (YPDEHTHSEDSRSCESMDGPP), and 756-782 (ASAPSGVQQVNVTDSDEEEEEKVLRNL). Over residues 512–522 (TLFQPSVSSTG) the composition is skewed to polar residues. Pro residues predominate over residues 525–538 (AVPPPSLTPRPSLP). The span at 555–574 (SGSSRSVKRSTPGSLESTTR) shows a compositional bias: polar residues. The segment covering 704–718 (YPDEHTHSEDSRSCE) has biased composition (basic and acidic residues).

As to quaternary structure, interacts with CTNNB1, competitively inhibiting CTNNB1-TCF7L2/TCF4 interaction. In terms of tissue distribution, expressed in the lung (at protein level). Expressed in testes (at protein level). Expressed in preleptotene spermatocytes, round spermatids, and elongated spermatids in the testis (at protein level). Expressed in pachytene spermatocytes during stages 3 to 8 of spermatogenesis (at protein level). Increased expression in diplotene spermatocytes at stage 9-11 and in metaphase spermatocytes or secondary spermatocytes at stage 12. Expressed in ovaries.

Its subcellular location is the nucleus. It is found in the cytoplasm. Its function is as follows. Acts both as a transcriptional activator and a repressor. Binds to the DNA sequence 5'-ACAAT-3' and shows a preference for guanine residues surrounding this core motif. Binds to its own promoter and activates its own transcription. Required to activate the expression of postmeiotic genes involved in spermiogenesis. Binds to the promoter region of CTNNB1 and represses its transcription which leads to inhibition of Wnt signaling. Also inhibits Wnt signaling by binding to the CTNNB1 protein, preventing interaction of CTNNB1 with TCF7L2/TCF4. In Mus musculus (Mouse), this protein is Transcription factor SOX-30 (Sox30).